The primary structure comprises 472 residues: UDP-N-acetylmuramate--L-alanine ligase (472 aa).

Position 119–125 (119–125 (GTHGKTT)) interacts with ATP.

This sequence belongs to the MurCDEF family.

The protein localises to the cytoplasm. The enzyme catalyses UDP-N-acetyl-alpha-D-muramate + L-alanine + ATP = UDP-N-acetyl-alpha-D-muramoyl-L-alanine + ADP + phosphate + H(+). Its pathway is cell wall biogenesis; peptidoglycan biosynthesis. Functionally, cell wall formation. The polypeptide is UDP-N-acetylmuramate--L-alanine ligase (Caulobacter sp. (strain K31)).